The primary structure comprises 439 residues: Adenylosuccinate synthetase (439 aa).

GTP is bound by residues 14-20 and 42-44; these read GDEGKGK and GHT. Asp-15 (proton acceptor) is an active-site residue. 2 residues coordinate Mg(2+): Asp-15 and Gly-42. IMP contacts are provided by residues 15–18, 40–43, Thr-130, Arg-144, Gln-225, Thr-240, and Arg-304; these read DEGK and NAGH. The Proton donor role is filled by His-43. 300–306 provides a ligand contact to substrate; that stretch reads TTTGRRR. GTP is bound by residues Arg-306, 332 to 334, and 414 to 416; these read KLD and SLG.

It belongs to the adenylosuccinate synthetase family. In terms of assembly, homodimer. It depends on Mg(2+) as a cofactor.

The protein resides in the cytoplasm. It carries out the reaction IMP + L-aspartate + GTP = N(6)-(1,2-dicarboxyethyl)-AMP + GDP + phosphate + 2 H(+). Its pathway is purine metabolism; AMP biosynthesis via de novo pathway; AMP from IMP: step 1/2. Its function is as follows. Plays an important role in the de novo pathway of purine nucleotide biosynthesis. Catalyzes the first committed step in the biosynthesis of AMP from IMP. The chain is Adenylosuccinate synthetase from Prochlorococcus marinus (strain MIT 9303).